A 315-amino-acid chain; its full sequence is Vomeronasal type-1 receptor 54 (315 aa).

Residues 1–15 (MNKMNRLSHNTEIRN) lie on the Extracellular side of the membrane. The chain crosses the membrane as a helical span at residues 16–40 (AIYSGVGIGISGNSFLLLFHIFKYI). Residues 41-51 (RGQRSRHIDLP) lie on the Cytoplasmic side of the membrane. The chain crosses the membrane as a helical span at residues 52-71 (IGLLSLIHLVMLIAMSLVAT). Topologically, residues 72-90 (DIFMPWGRWGDTTCKCVIS) are extracellular. An intrachain disulfide couples Cys-85 to Cys-172. Residues 91 to 112 (LYRFCRSLSLCATSLLSILQAV) form a helical membrane-spanning segment. Over 113–132 (TLNPRNSCLEKFKRKSPHYM) the chain is Cytoplasmic. A helical membrane pass occupies residues 133–154 (LGCLLFLSVFYTFISSPLATYI). The Extracellular segment spans residues 155–193 (TAKSNLTSPSFTYITTSCSLAPMSYSFHLTVFILLTSRD). Residues 194 to 212 (VIFVGLMLLSSGYMVTFLG) traverse the membrane as a helical segment. Over 213 to 239 (RHKKQSQFLHITSFSLKPSAEKRAMRT) the chain is Cytoplasmic. Residues 240 to 260 (ILCLMSFFVLMYTLDSIVSYI) form a helical membrane-spanning segment. Residues 261-267 (RSIDDGQ) lie on the Extracellular side of the membrane. Residues 268–288 (IFYCVHIFTAHGYATVSPFLI) form a helical membrane-spanning segment. The Cytoplasmic segment spans residues 289-315 (LSTEKYIINIFRSTFGRMVTIILLRNR).

It belongs to the G-protein coupled receptor 1 family.

It is found in the cell membrane. In terms of biological role, putative pheromone receptor implicated in the regulation of social and reproductive behavior. The sequence is that of Vomeronasal type-1 receptor 54 (Vmn1r54) from Mus musculus (Mouse).